Consider the following 330-residue polypeptide: Aspartate--ammonia ligase (330 aa).

This sequence belongs to the class-II aminoacyl-tRNA synthetase family. AsnA subfamily.

It localises to the cytoplasm. It catalyses the reaction L-aspartate + NH4(+) + ATP = L-asparagine + AMP + diphosphate + H(+). The protein operates within amino-acid biosynthesis; L-asparagine biosynthesis; L-asparagine from L-aspartate (ammonia route): step 1/1. The sequence is that of Aspartate--ammonia ligase from Salmonella schwarzengrund (strain CVM19633).